A 265-amino-acid polypeptide reads, in one-letter code: Early E4 31 kDa protein (265 aa).

It belongs to the adenoviridae E4 30 to 34 kDa protein family. As to quaternary structure, interacts with E1B-55k.

It localises to the host nucleus. Its subcellular location is the host cytoplasm. In terms of biological role, plays a major role to prevent cellular inhibition of viral genome replication by nuclear bodies. Assembles an SCF-like E3 ubiquitin ligase complex based on the cellular proteins ELOB, ELOC, CUL5 and RBX1, in cooperation with viral E1B-55K. This viral RING-type ligase ubiquitinates cellular substrates prior to proteasomal degradation: p53/TP53, LIG4, MRE11-RAD50-NBS1 (MRN) complex, ITGA3, DAXX and BLM. In Canis lupus familiaris (Dog), this protein is Early E4 31 kDa protein.